Consider the following 153-residue polypeptide: MAANCERTFIAIKPDGVQRGLVGEIIKRFEQKGFRLVAMKFVHASEDLLKQHYIDLKDRPFYPGLVKYMNSGPVVAMVWEGLNVVKTGRVMLGETNPADSKPGTIRGDFCIQVGRNIIHGSDSVESAQKEISLWFKPAELIDYRSCAHDWVYE.

ATP-binding residues include lysine 13, phenylalanine 61, arginine 89, threonine 95, arginine 106, and asparagine 116. Catalysis depends on histidine 119, which acts as the Pros-phosphohistidine intermediate.

Belongs to the NDK family. The cofactor is Mg(2+).

It is found in the cytoplasm. Its subcellular location is the cell membrane. The enzyme catalyses a 2'-deoxyribonucleoside 5'-diphosphate + ATP = a 2'-deoxyribonucleoside 5'-triphosphate + ADP. It carries out the reaction a ribonucleoside 5'-diphosphate + ATP = a ribonucleoside 5'-triphosphate + ADP. Major role in the synthesis of nucleoside triphosphates other than ATP. The ATP gamma phosphate is transferred to the NDP beta phosphate via a ping-pong mechanism, using a phosphorylated active-site intermediate. The polypeptide is Nucleoside diphosphate kinase (Gallus gallus (Chicken)).